The following is a 69-amino-acid chain: Conotoxin Eb6.1 (69 aa).

Positions Val1–Ala17 are cleaved as a signal peptide. Residues Glu18 to Arg41 constitute a propeptide that is removed on maturation. 3 disulfide bridges follow: Cys43/Cys57, Cys50/Cys61, and Cys56/Cys68.

The protein belongs to the conotoxin O1 superfamily. As to expression, expressed by the venom duct.

It is found in the secreted. The chain is Conotoxin Eb6.1 (E1) from Conus ebraeus (Hebrew cone).